Here is a 901-residue protein sequence, read N- to C-terminus: Protein translocase subunit SecA (901 aa).

ATP is bound by residues Gln-85, 103–107 (GEGKT), and Asp-510. Residues 848 to 901 (RINQNNLPVDENSQTTQNSETEDYSDRRIGRNEPCPCGSGKKYKHCHGSRVARQ) form a disordered region. A compositionally biased stretch (polar residues) spans 849–866 (INQNNLPVDENSQTTQNS). Positions 882, 884, 893, and 894 each coordinate Zn(2+). Positions 888 to 901 (KKYKHCHGSRVARQ) are enriched in basic residues.

Belongs to the SecA family. Monomer and homodimer. Part of the essential Sec protein translocation apparatus which comprises SecA, SecYEG and auxiliary proteins SecDF-YajC and YidC. Forms a complex with SecB. Zn(2+) is required as a cofactor.

The protein resides in the cell inner membrane. The protein localises to the cytoplasm. The enzyme catalyses ATP + H2O + cellular proteinSide 1 = ADP + phosphate + cellular proteinSide 2.. Its function is as follows. Part of the Sec protein translocase complex. Interacts with the SecYEG preprotein conducting channel. Has a central role in coupling the hydrolysis of ATP to the transfer of proteins into and across the cell membrane, serving both as a receptor for the preprotein-SecB complex and as an ATP-driven molecular motor driving the stepwise translocation of polypeptide chains across the membrane. This chain is Protein translocase subunit SecA, found in Haemophilus influenzae (strain ATCC 51907 / DSM 11121 / KW20 / Rd).